Reading from the N-terminus, the 231-residue chain is Probable pyridoxamine 5'-phosphate oxidase (231 aa).

A pyridoxal 5'-phosphate-binding site is contributed by Gln-20 to Lys-23. FMN is bound at residue Arg-74–Leu-77. Lys-79 lines the pyridoxal 5'-phosphate pocket. FMN-binding positions include Phe-89–Thr-90, Lys-96–Lys-97, and Gln-119. Pyridoxal 5'-phosphate contacts are provided by Tyr-137, Arg-141, and Ser-145. FMN contacts are provided by residues Gln-154–Ser-155 and Trp-202. Arg-208–His-210 is a binding site for pyridoxal 5'-phosphate. Position 212 (Arg-212) interacts with FMN.

The protein belongs to the pyridoxamine 5'-phosphate oxidase family. As to quaternary structure, homodimer. FMN is required as a cofactor.

It catalyses the reaction pyridoxamine 5'-phosphate + O2 + H2O = pyridoxal 5'-phosphate + H2O2 + NH4(+). The catalysed reaction is pyridoxine 5'-phosphate + O2 = pyridoxal 5'-phosphate + H2O2. Its pathway is cofactor metabolism; pyridoxal 5'-phosphate salvage; pyridoxal 5'-phosphate from pyridoxamine 5'-phosphate: step 1/1. The protein operates within cofactor metabolism; pyridoxal 5'-phosphate salvage; pyridoxal 5'-phosphate from pyridoxine 5'-phosphate: step 1/1. In terms of biological role, catalyzes the oxidation of either pyridoxine 5'-phosphate (PNP) or pyridoxamine 5'-phosphate (PMP) into pyridoxal 5'-phosphate (PLP). This chain is Probable pyridoxamine 5'-phosphate oxidase, found in Schizosaccharomyces pombe (strain 972 / ATCC 24843) (Fission yeast).